We begin with the raw amino-acid sequence, 222 residues long: Imidazoleglycerol-phosphate dehydratase (222 aa).

It belongs to the imidazoleglycerol-phosphate dehydratase family.

It carries out the reaction D-erythro-1-(imidazol-4-yl)glycerol 3-phosphate = 3-(imidazol-4-yl)-2-oxopropyl phosphate + H2O. The protein operates within amino-acid biosynthesis; L-histidine biosynthesis; L-histidine from 5-phospho-alpha-D-ribose 1-diphosphate: step 6/9. This chain is Imidazoleglycerol-phosphate dehydratase (HIS3), found in Scheffersomyces stipitis (strain ATCC 58785 / CBS 6054 / NBRC 10063 / NRRL Y-11545) (Yeast).